We begin with the raw amino-acid sequence, 548 residues long: Telomerase Cajal body protein 1 (548 aa).

Residues 1–142 form a disordered region; sequence MKTLETQPLA…SGEPAAEDEG (142 aa). Over residues 15 to 31 the composition is skewed to low complexity; the sequence is PSDQDPAPAHPSPHASP. A phosphoserine mark is found at Ser-26, Ser-30, and Ser-54. The residue at position 64 (Ser-64) is a Phosphoserine; by ATM. Ser-85, Ser-90, Ser-112, and Ser-114 each carry phosphoserine. 6 WD repeats span residues 167–206, 222–267, 272–313, 323–364, 365–405, and 411–450; these read QPENFLKGCKWAPDGSCILTNSADNILRIYNLPPELYHEG, EGDT…LRAS, NHLD…RDCE, GQSG…ALLG, GHQG…YPLW, and VTTNQRIYFDLDPTGQFLVSGSTSGAVSVWDTDGPGNDGK. Residue Thr-489 is modified to Phosphothreonine. The residue at position 491 (Ser-491) is a Phosphoserine. The tract at residues 526–548 is disordered; it reads SIPDDHQGEKGQGGTEGGVGELI. The span at 535-548 shows a compositional bias: gly residues; the sequence is KGQGGTEGGVGELI.

This sequence belongs to the TCAB1 family. As to quaternary structure, component of the telomerase holoenzyme complex composed of one molecule of TERT, one molecule of WRAP53/TCAB1, two molecules of H/ACA ribonucleoprotein complex subunits DKC1, NOP10, NHP2 and GAR1, and a telomerase RNA template component (TERC). The telomerase holoenzyme complex is associated with TEP1, SMG6/EST1A and POT1. Interacts with the chaperonin-containing T-complex (TRiC) complex; which mediates the folding of WRAP53/TCAB1. Interacts with COIL. Interacts with SMN1. Interacts with RNF8. Interacts with histone H2AX. Phosphorylated at Ser-64 by ATM in response to DNA damage, promoting its interaction with histone H2AX and localization to sites of DNA double-strand breaks. Expressed in all tissues and cell lines examined.

The protein localises to the nucleus. Its subcellular location is the cajal body. The protein resides in the chromosome. It localises to the telomere. In terms of biological role, RNA chaperone that plays a key role in telomere maintenance and RNA localization to Cajal bodies. Specifically recognizes and binds the Cajal body box (CAB box) present in both small Cajal body RNAs (scaRNAs) and telomerase RNA template component (TERC). Essential component of the telomerase holoenzyme complex, a ribonucleoprotein complex essential for the replication of chromosome termini that elongates telomeres in most eukaryotes. In the telomerase holoenzyme complex, required to stimulate the catalytic activity of the complex. Acts by specifically binding the CAB box of the TERC RNA and controlling the folding of the CR4/CR5 region of the TERC RNA, a critical step for telomerase activity. In addition, also controls telomerase holoenzyme complex localization to Cajal body. During S phase, required for delivery of TERC to telomeres during S phase and for telomerase activity. In addition to its role in telomere maintenance, also required for Cajal body formation, probably by mediating localization of scaRNAs to Cajal bodies. Also plays a role in DNA repair: phosphorylated by ATM in response to DNA damage and relocalizes to sites of DNA double-strand breaks to promote the repair of DNA double-strand breaks. Acts by recruiting the ubiquitin ligase RNF8 to DNA breaks and promote both homologous recombination (HR) and non-homologous end joining (NHEJ). The polypeptide is Telomerase Cajal body protein 1 (Homo sapiens (Human)).